A 267-amino-acid chain; its full sequence is Mediator of RNA polymerase II transcription subunit 8 (267 aa).

2 coiled-coil regions span residues 2-27 and 118-163; these read QQRE…KGSL and VEEQ…EDRD. The segment covering 156-165 has biased composition (basic and acidic residues); that stretch reads NNPREDRDSE. Disordered regions lie at residues 156 to 180 and 227 to 267; these read NNPR…NPAD and ASGH…PYNR. A compositionally biased stretch (polar residues) spans 166-180; it reads TSALRQNKPSFNPAD. The span at 236 to 247 shows a compositional bias: low complexity; it reads GPVAPQQPGQPG.

Belongs to the Mediator complex subunit 8 family. Component of the Mediator complex. May be part of a multisubunit E3 ubiquitin-protein ligase complex.

It localises to the nucleus. It functions in the pathway protein modification; protein ubiquitination. Its function is as follows. Component of the Mediator complex, a coactivator involved in the regulated transcription of nearly all RNA polymerase II-dependent genes. Mediator functions as a bridge to convey information from gene-specific regulatory proteins to the basal RNA polymerase II transcription machinery. Mediator is recruited to promoters by direct interactions with regulatory proteins and serves as a scaffold for the assembly of a functional preinitiation complex with RNA polymerase II and the general transcription factors. May play a role as a target recruitment subunit in E3 ubiquitin-protein ligase complexes and thus in ubiquitination and subsequent proteasomal degradation of target proteins. This is Mediator of RNA polymerase II transcription subunit 8 (med8) from Danio rerio (Zebrafish).